The chain runs to 61 residues: Insect toxin LqhIT5 (61 aa).

The LCN-type CS-alpha/beta domain occupies 1–61 (DGYIRGGDGC…EWKYETNTCG (61 aa)). Intrachain disulfides connect cysteine 10/cysteine 60, cysteine 14/cysteine 35, cysteine 21/cysteine 42, and cysteine 25/cysteine 44.

It belongs to the long (4 C-C) scorpion toxin superfamily. Sodium channel inhibitor family. Beta subfamily. In terms of tissue distribution, expressed by the venom gland.

It is found in the secreted. Excitatory insect beta-toxins induce a spastic paralysis. They bind voltage-independently at site-4 of sodium channels (Nav) and shift the voltage of activation toward more negative potentials thereby affecting sodium channel activation and promoting spontaneous and repetitive firing. This toxin is active only on insects. It operates by inducing a fast contraction paralysis without depressant activity. It is more similar to the excitatory toxins in its mode of action and the depressant toxins in its primary structure. The polypeptide is Insect toxin LqhIT5 (Leiurus hebraeus (Hebrew deathstalker scorpion)).